Reading from the N-terminus, the 261-residue chain is Protein STAY-GREEN, chloroplastic (261 aa).

The N-terminal 54 residues, 1-54 (MDTLTSAPLLTTKFKPSFSPQQKPCFPHRRRFENGKKNQSIVPVARLFGPAIFE), are a transit peptide targeting the chloroplast.

It belongs to the staygreen family.

It localises to the plastid. The protein localises to the chloroplast. Functionally, probably involved in the disassembling mechanism of the intact light-harvesting complex of photosystem II (LHCII) in the thylakoid membranes. Required for the chlorophyll breakdown pathway. Acts independent and upstream of pheophorbide a oxygenase (PAO). The protein is Protein STAY-GREEN, chloroplastic (SGR) of Pisum sativum (Garden pea).